The sequence spans 378 residues: Flagellar P-ring protein 2 (378 aa).

An N-terminal signal peptide occupies residues 1 to 33 (MHEVSDKTNAIHPLQRVSRALFALGLLCFAAMA).

Belongs to the FlgI family. The basal body constitutes a major portion of the flagellar organelle and consists of four rings (L,P,S, and M) mounted on a central rod.

It localises to the periplasm. The protein resides in the bacterial flagellum basal body. Assembles around the rod to form the L-ring and probably protects the motor/basal body from shearing forces during rotation. The chain is Flagellar P-ring protein 2 from Hahella chejuensis (strain KCTC 2396).